Reading from the N-terminus, the 2167-residue chain is RNA editing associated helicase 2 (2167 aa).

Residues 1 to 30 constitute a mitochondrion transit peptide; the sequence is MRAIRLTVACRYLGPFRSVTLSPVVLPVRL. Disordered regions lie at residues 503–593 and 937–969; these read RARG…DEAT and ENAT…PTNV. Residues 532–541 show a composition bias toward low complexity; the sequence is SSTQTPSSST. Positions 1024-1095 constitute a DRBM domain; the sequence is DAKTVLQRYC…AMHALALLRR (72 aa). The Helicase ATP-binding domain maps to 1348–1513; sequence LRAISSNQIV…FGNAPIINVE (166 aa). 1361 to 1368 contributes to the ATP binding site; sequence GTTGCGKT. The short motif at 1366–1367 is the Important for binding to gRNA element; sequence GK. The DEAH box signature appears at 1460-1463; the sequence is DEIH. The region spanning 1585 to 1762 is the Helicase C-terminal domain; the sequence is AIDHAVRSLD…SLCLQILALD (178 aa). Positions 2132–2167 are disordered; it reads IIEPCTEPKGGSSEAEKTHVNSSHTPTTSAEAGGDS. The segment covering 2151 to 2161 has biased composition (polar residues); that stretch reads VNSSHTPTTSA.

It belongs to the DEAD box helicase family. DEAH subfamily. As to quaternary structure, component of the REH2-associated complex (REH2C) composed of helicase REH2, associated factors H2F1 and H2F2, and mRNAs at various editing stages; the formation of the complex is RNA-independent. Within the complex, interacts with H2F1; the interaction is direct. Interacts transiently, in a RNA-dependent manner, with various editing complexes including the RNA editing core (RECC) complex, the gRNA-binding (GRBC) complex (also known as the MRB1 complex) and the RNA editing mediator (REMC) complex. Interacts with GAP1/GRBC2 via RNA forming a variant of the GRBC complex known as REH2-GRBC complex. Interacts with mitochondrial ribosomes.

It is found in the mitochondrion. It carries out the reaction ATP + H2O = ADP + phosphate + H(+). ATP-dependent RNA helicase that unwinds RNA in a 3' to 5' direction and that plays an important role in mitochondrial mRNA editing, a process involving the addition and deletion of uridine (U) nucleotides in the pre-mRNA. As part of the RET2-containing gRNA-binding (RET2-GRBC) complex, acts as a scaffold for the assembly of mRNA-gRNA hybrids and the recruitment of the RNA editing core (RECC) complex. Regulates several steps of mRNA editing by the MRBC3010/GRBC6 containing gRNA-binding (MRBC3010-GRBC) complex including loading of unedited mRNA, editing in the first sequence block and subsequent editing progression across multiple sequence blocks. Also, regulates the RNA substrate content of the MRBC3010-GRBC complex as well as the association of this complex with mitoribosomes. The sequence is that of RNA editing associated helicase 2 from Trypanosoma brucei brucei (strain 927/4 GUTat10.1).